The sequence spans 559 residues: Cytoplasmic polyadenylation element-binding protein 1 (559 aa).

The tract at residues 222–243 (SRMDHSSSPLTPPPSASPSGSL) is disordered. RRM domains follow at residues 304 to 401 (CKVF…DAQV) and 423 to 504 (NTVF…PYLE). The Zn(2+) site is built by C508, C511, C520, C525, C530, C533, H538, and H546.

This sequence belongs to the RRM CPEB family. Expressed in oocytes (at protein level). During oocyte maturation becomes detectable at stage Ib, and remains ubiquitously distributed within the oocyte cytoplasm until stage II. It then follows a gradual accumulation to the future animal pole during stage III, and remains localized to this pole at stage IV (at protein level). Expressed in oocytes, blastomeres and pre-mid-blastula transition embryos. Its expression during oogenesis is ubiquitous at stages I and II, but gradually accumulated at the periphery of the oocyte in the presumptive animal pole during stage III. Expression was maintained in that region at stage IV, and then became delocalized at stage V to cover a much broader area presumably encompassing the future blastodisc.

The protein resides in the cytoplasm. Functionally, sequence-specific RNA-binding protein that regulates mRNA cytoplasmic polyadenylation and translation initiation during oocyte maturation and early development. Binds to the cytoplasmic polyadenylation element (CPE), an uridine-rich sequence element (consensus sequence 5'-UUUUUAU-3') within the mRNA 3'-UTR. The chain is Cytoplasmic polyadenylation element-binding protein 1 (cpeb1) from Danio rerio (Zebrafish).